A 265-amino-acid polypeptide reads, in one-letter code: tRNA pseudouridine synthase A (265 aa).

The active-site Nucleophile is D53. Y111 serves as a coordination point for substrate.

Belongs to the tRNA pseudouridine synthase TruA family. Homodimer.

The catalysed reaction is uridine(38/39/40) in tRNA = pseudouridine(38/39/40) in tRNA. In terms of biological role, formation of pseudouridine at positions 38, 39 and 40 in the anticodon stem and loop of transfer RNAs. The polypeptide is tRNA pseudouridine synthase A (Acinetobacter baumannii (strain ACICU)).